The following is a 171-amino-acid chain: Group 1 truncated hemoglobin LI410 (171 aa).

The transit peptide at 1-23 directs the protein to the chloroplast; it reads MMRTVQLRTLRPCIRAQQQPVRA. Positions 63 and 111 each coordinate heme.

Belongs to the truncated hemoglobin family. Group I subfamily. The cofactor is heme.

Its subcellular location is the plastid. It localises to the chloroplast. This is Group 1 truncated hemoglobin LI410 (LI410) from Chlamydomonas moewusii (Chlamydomonas eugametos).